The following is a 306-amino-acid chain: Immune protein Tsi7 (306 aa).

As to quaternary structure, interacts with Tse7.

In terms of biological role, immunity protein that plays a role in preventing early activation of toxin Tse7. Protects thereby cells from Tse7 DNase activity. The polypeptide is Immune protein Tsi7 (Pseudomonas aeruginosa (strain ATCC 15692 / DSM 22644 / CIP 104116 / JCM 14847 / LMG 12228 / 1C / PRS 101 / PAO1)).